The following is a 370-amino-acid chain: tRNA-specific 2-thiouridylase MnmA (370 aa).

ATP-binding positions include 25-32 (ALSGGVDS) and Leu-51. Cys-112 acts as the Nucleophile in catalysis. An intrachain disulfide couples Cys-112 to Cys-211. An ATP-binding site is contributed by Gly-137. Residues 161–163 (KDQ) form an interaction with tRNA region. Cys-211 serves as the catalytic Cysteine persulfide intermediate. The interaction with tRNA stretch occupies residues 316–317 (RY).

The protein belongs to the MnmA/TRMU family.

It localises to the cytoplasm. The enzyme catalyses S-sulfanyl-L-cysteinyl-[protein] + uridine(34) in tRNA + AH2 + ATP = 2-thiouridine(34) in tRNA + L-cysteinyl-[protein] + A + AMP + diphosphate + H(+). Functionally, catalyzes the 2-thiolation of uridine at the wobble position (U34) of tRNA, leading to the formation of s(2)U34. The polypeptide is tRNA-specific 2-thiouridylase MnmA (Synechococcus sp. (strain JA-3-3Ab) (Cyanobacteria bacterium Yellowstone A-Prime)).